Reading from the N-terminus, the 329-residue chain is Tyrosine recombinase XerC 1 (329 aa).

Residues 14 to 101 form the Core-binding (CB) domain; sequence APPHPQIGAY…AWRGWYQWLA (88 aa). One can recognise a Tyr recombinase domain in the interval 123–320; sequence RLPKALSVEQ…DFQHLAKIYD (198 aa). Catalysis depends on residues Arg-163, Lys-198, His-272, Arg-275, and His-298. Tyr-307 serves as the catalytic O-(3'-phospho-DNA)-tyrosine intermediate.

The protein belongs to the 'phage' integrase family. XerC subfamily. As to quaternary structure, forms a cyclic heterotetrameric complex composed of two molecules of XerC and two molecules of XerD.

It is found in the cytoplasm. Functionally, site-specific tyrosine recombinase, which acts by catalyzing the cutting and rejoining of the recombining DNA molecules. The XerC-XerD complex is essential to convert dimers of the bacterial chromosome into monomers to permit their segregation at cell division. It also contributes to the segregational stability of plasmids. In Ralstonia nicotianae (strain ATCC BAA-1114 / GMI1000) (Ralstonia solanacearum), this protein is Tyrosine recombinase XerC 1 (xerC1).